The chain runs to 301 residues: tRNA pseudouridine synthase B (301 aa).

Asp48 serves as the catalytic Nucleophile.

This sequence belongs to the pseudouridine synthase TruB family. Type 1 subfamily.

The enzyme catalyses uridine(55) in tRNA = pseudouridine(55) in tRNA. Functionally, responsible for synthesis of pseudouridine from uracil-55 in the psi GC loop of transfer RNAs. The sequence is that of tRNA pseudouridine synthase B from Mycobacterium ulcerans (strain Agy99).